The following is a 229-amino-acid chain: Demethylmenaquinone methyltransferase (229 aa).

Residues T62, D80, D100–G101, and S117 contribute to the S-adenosyl-L-methionine site.

Belongs to the class I-like SAM-binding methyltransferase superfamily. MenG/UbiE family.

It carries out the reaction a 2-demethylmenaquinol + S-adenosyl-L-methionine = a menaquinol + S-adenosyl-L-homocysteine + H(+). The protein operates within quinol/quinone metabolism; menaquinone biosynthesis; menaquinol from 1,4-dihydroxy-2-naphthoate: step 2/2. Its function is as follows. Methyltransferase required for the conversion of demethylmenaquinol (DMKH2) to menaquinol (MKH2). This Corynebacterium kroppenstedtii (strain DSM 44385 / JCM 11950 / CIP 105744 / CCUG 35717) protein is Demethylmenaquinone methyltransferase.